The chain runs to 294 residues: Probable ABC transporter permease protein YqgI (294 aa).

Transmembrane regions (helical) follow at residues 14-34 (FGLCAAIIAAILVGLFSYIII), 66-86 (FYILFITMLITIPLGVGGGVF), 99-121 (FIRTCIEVLSSLPSIVIGMFGLL), 126-148 (LTGWGYTIIGGALALTVFNLPVM), 190-210 (IITGAILASGRVFGEAAALLF), and 260-280 (AIANGGSAVLVISVLVFNLAA). In terms of domain architecture, ABC transmembrane type-1 spans 62 to 280 (LFNSFYILFI…ISVLVFNLAA (219 aa)).

This sequence belongs to the binding-protein-dependent transport system permease family. CysTW subfamily.

The protein localises to the cell membrane. In terms of biological role, part of the binding-protein-dependent transport system YqgGHIJK. Probably responsible for the translocation of the substrate across the membrane. The polypeptide is Probable ABC transporter permease protein YqgI (yqgI) (Bacillus subtilis (strain 168)).